Here is a 184-residue protein sequence, read N- to C-terminus: uncharacterized protein (184 aa).

This sequence belongs to the TorD/DmsD family.

This is an uncharacterized protein from Haemophilus influenzae (strain ATCC 51907 / DSM 11121 / KW20 / Rd).